A 394-amino-acid chain; its full sequence is 1-deoxy-D-xylulose 5-phosphate reductoisomerase (394 aa).

The NADPH site is built by threonine 10, glycine 11, serine 12, isoleucine 13, glycine 38, arginine 39, asparagine 40, and asparagine 123. Position 124 (lysine 124) interacts with 1-deoxy-D-xylulose 5-phosphate. Glutamate 125 serves as a coordination point for NADPH. Position 149 (aspartate 149) interacts with Mn(2+). Serine 150, glutamate 151, serine 175, and histidine 198 together coordinate 1-deoxy-D-xylulose 5-phosphate. Residue glutamate 151 participates in Mn(2+) binding. Glycine 204 contributes to the NADPH binding site. 4 residues coordinate 1-deoxy-D-xylulose 5-phosphate: serine 211, asparagine 216, lysine 217, and glutamate 220. Glutamate 220 serves as a coordination point for Mn(2+).

It belongs to the DXR family. Requires Mg(2+) as cofactor. It depends on Mn(2+) as a cofactor.

The catalysed reaction is 2-C-methyl-D-erythritol 4-phosphate + NADP(+) = 1-deoxy-D-xylulose 5-phosphate + NADPH + H(+). It participates in isoprenoid biosynthesis; isopentenyl diphosphate biosynthesis via DXP pathway; isopentenyl diphosphate from 1-deoxy-D-xylulose 5-phosphate: step 1/6. Functionally, catalyzes the NADPH-dependent rearrangement and reduction of 1-deoxy-D-xylulose-5-phosphate (DXP) to 2-C-methyl-D-erythritol 4-phosphate (MEP). The sequence is that of 1-deoxy-D-xylulose 5-phosphate reductoisomerase from Cereibacter sphaeroides (strain ATCC 17025 / ATH 2.4.3) (Rhodobacter sphaeroides).